Here is a 325-residue protein sequence, read N- to C-terminus: Quinolinate synthase (325 aa).

Positions 41 and 58 each coordinate iminosuccinate. Cysteine 103 lines the [4Fe-4S] cluster pocket. Iminosuccinate is bound by residues tyrosine 129–asparagine 131 and serine 146. Position 189 (cysteine 189) interacts with [4Fe-4S] cluster. Iminosuccinate contacts are provided by residues histidine 215–glutamate 217 and threonine 232. Cysteine 282 is a [4Fe-4S] cluster binding site.

It belongs to the quinolinate synthase family. Type 2 subfamily. It depends on [4Fe-4S] cluster as a cofactor.

The protein localises to the cytoplasm. The enzyme catalyses iminosuccinate + dihydroxyacetone phosphate = quinolinate + phosphate + 2 H2O + H(+). Its pathway is cofactor biosynthesis; NAD(+) biosynthesis; quinolinate from iminoaspartate: step 1/1. Its function is as follows. Catalyzes the condensation of iminoaspartate with dihydroxyacetone phosphate to form quinolinate. This chain is Quinolinate synthase, found in Rippkaea orientalis (strain PCC 8801 / RF-1) (Cyanothece sp. (strain PCC 8801)).